The primary structure comprises 557 residues: 2-isopropylmalate synthase (557 aa).

The 275-residue stretch at 33-307 (PLWLSTDLRD…DPGLDFSDID (275 aa)) folds into the Pyruvate carboxyltransferase domain. Mg(2+) is bound by residues aspartate 42, histidine 246, histidine 248, and asparagine 282. The regulatory domain stretch occupies residues 439–557 (AETPYALKGH…LGQQASIRAA (119 aa)).

It belongs to the alpha-IPM synthase/homocitrate synthase family. LeuA type 2 subfamily. In terms of assembly, homodimer. It depends on Mg(2+) as a cofactor.

It localises to the cytoplasm. The catalysed reaction is 3-methyl-2-oxobutanoate + acetyl-CoA + H2O = (2S)-2-isopropylmalate + CoA + H(+). Its pathway is amino-acid biosynthesis; L-leucine biosynthesis; L-leucine from 3-methyl-2-oxobutanoate: step 1/4. Functionally, catalyzes the condensation of the acetyl group of acetyl-CoA with 3-methyl-2-oxobutanoate (2-ketoisovalerate) to form 3-carboxy-3-hydroxy-4-methylpentanoate (2-isopropylmalate). This is 2-isopropylmalate synthase from Azotobacter vinelandii (strain DJ / ATCC BAA-1303).